Consider the following 283-residue polypeptide: Bifunctional protein FolD (283 aa).

NADP(+)-binding positions include glycine 166–serine 168, serine 191, and isoleucine 232.

This sequence belongs to the tetrahydrofolate dehydrogenase/cyclohydrolase family. Homodimer.

The enzyme catalyses (6R)-5,10-methylene-5,6,7,8-tetrahydrofolate + NADP(+) = (6R)-5,10-methenyltetrahydrofolate + NADPH. It carries out the reaction (6R)-5,10-methenyltetrahydrofolate + H2O = (6R)-10-formyltetrahydrofolate + H(+). It functions in the pathway one-carbon metabolism; tetrahydrofolate interconversion. In terms of biological role, catalyzes the oxidation of 5,10-methylenetetrahydrofolate to 5,10-methenyltetrahydrofolate and then the hydrolysis of 5,10-methenyltetrahydrofolate to 10-formyltetrahydrofolate. This chain is Bifunctional protein FolD, found in Laribacter hongkongensis (strain HLHK9).